The primary structure comprises 333 residues: Nucleoid-associated protein (333 aa).

This sequence belongs to the YejK family.

It is found in the cytoplasm. The protein resides in the nucleoid. This chain is Nucleoid-associated protein, found in Metapseudomonas resinovorans (Pseudomonas resinovorans).